The sequence spans 870 residues: Ribonucleoside-diphosphate reductase large subunit (870 aa).

Residues Met16 to Lys110 form the ATP-cone domain. Residues Lys20–Arg21, Glu26–Lys32, Thr71, and Asp75 contribute to the ATP site. Ser235 is a binding site for GDP. Cys236 and Cys463 are disulfide-bonded. DTTP is bound by residues Asp244–Ile246, Lys261, Arg274, and Arg281–Gly282. Asn446 serves as a coordination point for GDP. The active-site Proton acceptor is the Asn446. Cys448 serves as the catalytic Cysteine radical intermediate. GDP contacts are provided by residues Glu450 and Thr632–Thr635. The active-site Proton acceptor is the Glu450. Positions Lys789 to Tyr854 are disordered. Positions Asn796–Ser811 are enriched in low complexity. The segment covering Asn812–Thr831 has biased composition (polar residues). A compositionally biased stretch (low complexity) spans Gln832–Gln844.

It belongs to the ribonucleoside diphosphate reductase large chain family. Heterodimer of a large and a small subunit.

The protein resides in the cytoplasm. The catalysed reaction is a 2'-deoxyribonucleoside 5'-diphosphate + [thioredoxin]-disulfide + H2O = a ribonucleoside 5'-diphosphate + [thioredoxin]-dithiol. Its activity is regulated as follows. Under complex allosteric control mediated by deoxynucleoside triphosphates and ATP binding to separate specificity and activation sites on the large subunit. The type of nucleotide bound at the specificity site determines substrate preference. It seems probable that ATP makes the enzyme reduce CDP and UDP, dGTP favors ADP reduction and dTTP favors GDP reduction. Stimulated by ATP and inhibited by dATP binding to the activity site. In terms of biological role, provides the precursors necessary for DNA synthesis. Catalyzes the biosynthesis of deoxyribonucleotides from the corresponding ribonucleotides. The chain is Ribonucleoside-diphosphate reductase large subunit (rnrA) from Dictyostelium discoideum (Social amoeba).